A 185-amino-acid polypeptide reads, in one-letter code: Large ribosomal subunit protein uL5m (185 aa).

The protein belongs to the universal ribosomal protein uL5 family. In terms of assembly, component of the mitochondrial ribosome large subunit.

Its subcellular location is the mitochondrion. The protein is Large ribosomal subunit protein uL5m (RPL5) of Arabidopsis thaliana (Mouse-ear cress).